Reading from the N-terminus, the 236-residue chain is 2,3,4,5-tetrahydropyridine-2,6-dicarboxylate N-acetyltransferase (236 aa).

The protein belongs to the transferase hexapeptide repeat family. DapH subfamily.

It carries out the reaction (S)-2,3,4,5-tetrahydrodipicolinate + acetyl-CoA + H2O = L-2-acetamido-6-oxoheptanedioate + CoA. It participates in amino-acid biosynthesis; L-lysine biosynthesis via DAP pathway; LL-2,6-diaminopimelate from (S)-tetrahydrodipicolinate (acetylase route): step 1/3. In terms of biological role, catalyzes the transfer of an acetyl group from acetyl-CoA to tetrahydrodipicolinate. The polypeptide is 2,3,4,5-tetrahydropyridine-2,6-dicarboxylate N-acetyltransferase (Oceanobacillus iheyensis (strain DSM 14371 / CIP 107618 / JCM 11309 / KCTC 3954 / HTE831)).